Here is a 31-residue protein sequence, read N- to C-terminus: Photosystem II reaction center protein T (31 aa).

A helical membrane pass occupies residues 3–23; sequence ALVYVFLLTGTLMVIFFAIFF.

It belongs to the PsbT family. In terms of assembly, PSII is composed of 1 copy each of membrane proteins PsbA, PsbB, PsbC, PsbD, PsbE, PsbF, PsbH, PsbI, PsbJ, PsbK, PsbL, PsbM, PsbT, PsbX, PsbY, PsbZ, Psb30/Ycf12, at least 3 peripheral proteins of the oxygen-evolving complex and a large number of cofactors. It forms dimeric complexes.

It is found in the plastid. Its subcellular location is the chloroplast thylakoid membrane. In terms of biological role, found at the monomer-monomer interface of the photosystem II (PS II) dimer, plays a role in assembly and dimerization of PSII. PSII is a light-driven water plastoquinone oxidoreductase, using light energy to abstract electrons from H(2)O, generating a proton gradient subsequently used for ATP formation. This is Photosystem II reaction center protein T from Pyropia yezoensis (Susabi-nori).